A 254-amino-acid chain; its full sequence is MAIANKNIIFVAGLGGIGFDTSREIVKSGPKNLVILDRIENPAAIAELKALNPNVTVTFYPYDVTVPVAETTKLLQKIFDQLKTVDLLINGAGILDDYQIERTIAVNFTGTVNTTTAIMSFWDKRKGGPGGVIANICSVTGFNAIYQVPVYSASKAAALSSTNSLAKLAPITGVTAYSINPGITKTPLVHKFNSWLDVEPRVAELLLEHPTQTSLQCAQNFVKAIEANQNGAIWKLDLGTLEAIEWTKHWDSHI.

Residue 10–33 (FVAGLGGIGFDTSREIVKSGPKNL) participates in NAD(+) binding. Ser-138 contacts substrate. Tyr-151 functions as the Proton acceptor in the catalytic mechanism.

Belongs to the short-chain dehydrogenases/reductases (SDR) family. In terms of assembly, homodimer.

The enzyme catalyses a primary alcohol + NAD(+) = an aldehyde + NADH + H(+). It catalyses the reaction a secondary alcohol + NAD(+) = a ketone + NADH + H(+). This is Alcohol dehydrogenase 1 (Adh1) from Drosophila mulleri (Fruit fly).